Reading from the N-terminus, the 431-residue chain is Adenylosuccinate synthetase (431 aa).

GTP-binding positions include 12 to 18 and 40 to 42; these read GDEGKGK and GHT. Asp13 serves as the catalytic Proton acceptor. 2 residues coordinate Mg(2+): Asp13 and Gly40. Residues 13–16, 38–41, Thr130, Arg144, Gln225, Thr240, and Arg304 each bind IMP; these read DEGK and NAGH. His41 (proton donor) is an active-site residue. 300–306 provides a ligand contact to substrate; sequence ATTGRPR. GTP-binding positions include Arg306, 332–334, and 414–416; these read KLD and SVG.

This sequence belongs to the adenylosuccinate synthetase family. In terms of assembly, homodimer. Mg(2+) serves as cofactor.

Its subcellular location is the cytoplasm. It carries out the reaction IMP + L-aspartate + GTP = N(6)-(1,2-dicarboxyethyl)-AMP + GDP + phosphate + 2 H(+). The protein operates within purine metabolism; AMP biosynthesis via de novo pathway; AMP from IMP: step 1/2. In terms of biological role, plays an important role in the de novo pathway of purine nucleotide biosynthesis. Catalyzes the first committed step in the biosynthesis of AMP from IMP. The polypeptide is Adenylosuccinate synthetase (Anaeromyxobacter sp. (strain Fw109-5)).